Reading from the N-terminus, the 273-residue chain is MNDKHLPDASAENPWLPLRQLTPARIALGRTGTSLPTRPQLDFQYAHAQARDAVHLPFDHAAISDGLRQRGRDSLLLHSAAADRHVYLQRPDLGRRLDEASVQRLREHAAGYDGQIDLAIVVADGLSALAVQRHTLPFLERLEEQALAEGWSLSPVVLVEQGRVAVADEIGELLRAKMSVILIGERPGLSSPDSLGLYFTWAPRVGLTDAYRNCISNVRLEGLSYGMAAHRLLYLMREACRRQLSGVNLKDEAEVQALDGEAPRTGNFLLARD.

Adenosylcob(III)alamin is bound by residues Val-164, Glu-185, and Cys-214.

It belongs to the EutC family. As to quaternary structure, the basic unit is a heterodimer which dimerizes to form tetramers. The heterotetramers trimerize; 6 large subunits form a core ring with 6 small subunits projecting outwards. Requires adenosylcob(III)alamin as cofactor.

The protein localises to the bacterial microcompartment. It catalyses the reaction ethanolamine = acetaldehyde + NH4(+). It participates in amine and polyamine degradation; ethanolamine degradation. In terms of biological role, catalyzes the deamination of various vicinal amino-alcohols to oxo compounds. Allows this organism to utilize ethanolamine as the sole source of nitrogen and carbon in the presence of external vitamin B12. In Pseudomonas aeruginosa (strain LESB58), this protein is Ethanolamine ammonia-lyase small subunit.